A 254-amino-acid chain; its full sequence is tRNA pseudouridine synthase A (254 aa).

D52 acts as the Nucleophile in catalysis. Y111 provides a ligand contact to substrate.

It belongs to the tRNA pseudouridine synthase TruA family. As to quaternary structure, homodimer.

It carries out the reaction uridine(38/39/40) in tRNA = pseudouridine(38/39/40) in tRNA. Its function is as follows. Formation of pseudouridine at positions 38, 39 and 40 in the anticodon stem and loop of transfer RNAs. The sequence is that of tRNA pseudouridine synthase A from Rhizorhabdus wittichii (strain DSM 6014 / CCUG 31198 / JCM 15750 / NBRC 105917 / EY 4224 / RW1) (Sphingomonas wittichii).